The chain runs to 295 residues: Tyrosine recombinase XerD (295 aa).

The Core-binding (CB) domain occupies 1 to 85 (METIIEEYLR…TIRSFHQFAI (85 aa)). One can recognise a Tyr recombinase domain in the interval 106–289 (KLPDVLNVDE…SKSQIRKMYN (184 aa)). Active-site residues include Arg146, Lys170, His241, Arg244, and His267. Catalysis depends on Tyr276, which acts as the O-(3'-phospho-DNA)-tyrosine intermediate.

This sequence belongs to the 'phage' integrase family. XerD subfamily. As to quaternary structure, forms a cyclic heterotetrameric complex composed of two molecules of XerC and two molecules of XerD.

It is found in the cytoplasm. Site-specific tyrosine recombinase, which acts by catalyzing the cutting and rejoining of the recombining DNA molecules. The XerC-XerD complex is essential to convert dimers of the bacterial chromosome into monomers to permit their segregation at cell division. It also contributes to the segregational stability of plasmids. In Staphylococcus aureus (strain COL), this protein is Tyrosine recombinase XerD.